A 78-amino-acid chain; its full sequence is Defensin beta 136 (78 aa).

The signal sequence occupies residues 1 to 21; sequence MNLCLSALLFFLVILLPSGKG. 3 disulfide bridges follow: Cys-33–Cys-60, Cys-40–Cys-54, and Cys-44–Cys-61.

The protein belongs to the beta-defensin family.

It localises to the secreted. In terms of biological role, host defense peptide that exhibits antibacterial and antifungal activity. Exhibits antimicrobial activity against E.coli, S.aureus and C.albicans (in vitro). Has high lipopolysaccharide (LPS)-binding affinity, and may thereby be involved in immunoregulation through LPS neutralization. This chain is Defensin beta 136 (DEFB136), found in Homo sapiens (Human).